A 1017-amino-acid polypeptide reads, in one-letter code: Probable isoleucine--tRNA ligase, cytoplasmic (1017 aa).

Residues 45–55 carry the 'HIGH' region motif; that stretch reads PFATGLPHYGH. The 'KMSKS' region signature appears at 609–613; it reads KMSKR. Lys-612 provides a ligand contact to ATP.

This sequence belongs to the class-I aminoacyl-tRNA synthetase family.

Its subcellular location is the cytoplasm. The enzyme catalyses tRNA(Ile) + L-isoleucine + ATP = L-isoleucyl-tRNA(Ile) + AMP + diphosphate. This chain is Probable isoleucine--tRNA ligase, cytoplasmic, found in Encephalitozoon cuniculi (strain GB-M1) (Microsporidian parasite).